The chain runs to 428 residues: 3-phosphoshikimate 1-carboxyvinyltransferase (428 aa).

Positions 22, 23, and 27 each coordinate 3-phosphoshikimate. Lys-22 serves as a coordination point for phosphoenolpyruvate. Phosphoenolpyruvate-binding residues include Gly-95 and Arg-123. Positions 170, 171, 172, 197, 316, and 343 each coordinate 3-phosphoshikimate. Gln-172 provides a ligand contact to phosphoenolpyruvate. The active-site Proton acceptor is Asp-316. Phosphoenolpyruvate-binding residues include Arg-347, Arg-390, and Lys-414.

It belongs to the EPSP synthase family. Monomer.

It is found in the cytoplasm. The catalysed reaction is 3-phosphoshikimate + phosphoenolpyruvate = 5-O-(1-carboxyvinyl)-3-phosphoshikimate + phosphate. The protein operates within metabolic intermediate biosynthesis; chorismate biosynthesis; chorismate from D-erythrose 4-phosphate and phosphoenolpyruvate: step 6/7. Functionally, catalyzes the transfer of the enolpyruvyl moiety of phosphoenolpyruvate (PEP) to the 5-hydroxyl of shikimate-3-phosphate (S3P) to produce enolpyruvyl shikimate-3-phosphate and inorganic phosphate. The polypeptide is 3-phosphoshikimate 1-carboxyvinyltransferase (Laribacter hongkongensis (strain HLHK9)).